A 240-amino-acid chain; its full sequence is Orotidine 5'-phosphate decarboxylase (240 aa).

Residues D15, K37, 64-73, T127, R188, Q197, G217, and R218 each bind substrate; that span reads DLKYHDIPNT. Catalysis depends on K66, which acts as the Proton donor.

The protein belongs to the OMP decarboxylase family. Type 1 subfamily. As to quaternary structure, homodimer.

It catalyses the reaction orotidine 5'-phosphate + H(+) = UMP + CO2. It participates in pyrimidine metabolism; UMP biosynthesis via de novo pathway; UMP from orotate: step 2/2. Functionally, catalyzes the decarboxylation of orotidine 5'-monophosphate (OMP) to uridine 5'-monophosphate (UMP). In Geobacter sp. (strain M21), this protein is Orotidine 5'-phosphate decarboxylase.